The following is a 190-amino-acid chain: Ras-related protein RabF1 (190 aa).

15-22 (GDSGVGKT) lines the GTP pocket. Positions 37–44 (HITIGIEF) match the Effector region motif. Residues 62-66 (DTAGE) and 119-122 (NKND) each bind GTP. The residue at position 187 (Cys187) is a Cysteine methyl ester. Cys187 carries S-geranylgeranyl cysteine lipidation. The propeptide at 188–190 (IIN) is removed in mature form.

The protein belongs to the small GTPase superfamily. Rab family.

The protein resides in the cell membrane. The polypeptide is Ras-related protein RabF1 (rabF1-1) (Dictyostelium discoideum (Social amoeba)).